Consider the following 157-residue polypeptide: Small ribosomal subunit protein uS7 (157 aa).

The protein belongs to the universal ribosomal protein uS7 family. Part of the 30S ribosomal subunit. Contacts proteins S9 and S11.

Functionally, one of the primary rRNA binding proteins, it binds directly to 16S rRNA where it nucleates assembly of the head domain of the 30S subunit. Is located at the subunit interface close to the decoding center, probably blocks exit of the E-site tRNA. In Polaromonas naphthalenivorans (strain CJ2), this protein is Small ribosomal subunit protein uS7.